The sequence spans 149 residues: Large ribosomal subunit protein bL9 (149 aa).

Belongs to the bacterial ribosomal protein bL9 family.

Functionally, binds to the 23S rRNA. The polypeptide is Large ribosomal subunit protein bL9 (Salmonella agona (strain SL483)).